A 565-amino-acid chain; its full sequence is Dihydroxy-acid dehydratase (565 aa).

Asp83 serves as a coordination point for Mg(2+). Position 124 (Cys124) interacts with [2Fe-2S] cluster. Positions 125 and 126 each coordinate Mg(2+). N6-carboxylysine is present on Lys126. Residue Cys197 coordinates [2Fe-2S] cluster. Glu451 is a Mg(2+) binding site. Catalysis depends on Ser477, which acts as the Proton acceptor.

Belongs to the IlvD/Edd family. In terms of assembly, homodimer. It depends on [2Fe-2S] cluster as a cofactor. Mg(2+) serves as cofactor.

It carries out the reaction (2R)-2,3-dihydroxy-3-methylbutanoate = 3-methyl-2-oxobutanoate + H2O. The catalysed reaction is (2R,3R)-2,3-dihydroxy-3-methylpentanoate = (S)-3-methyl-2-oxopentanoate + H2O. It functions in the pathway amino-acid biosynthesis; L-isoleucine biosynthesis; L-isoleucine from 2-oxobutanoate: step 3/4. Its pathway is amino-acid biosynthesis; L-valine biosynthesis; L-valine from pyruvate: step 3/4. In terms of biological role, functions in the biosynthesis of branched-chain amino acids. Catalyzes the dehydration of (2R,3R)-2,3-dihydroxy-3-methylpentanoate (2,3-dihydroxy-3-methylvalerate) into 2-oxo-3-methylpentanoate (2-oxo-3-methylvalerate) and of (2R)-2,3-dihydroxy-3-methylbutanoate (2,3-dihydroxyisovalerate) into 2-oxo-3-methylbutanoate (2-oxoisovalerate), the penultimate precursor to L-isoleucine and L-valine, respectively. The sequence is that of Dihydroxy-acid dehydratase from Symbiobacterium thermophilum (strain DSM 24528 / JCM 14929 / IAM 14863 / T).